A 183-amino-acid chain; its full sequence is Adenine phosphoribosyltransferase (183 aa).

This sequence belongs to the purine/pyrimidine phosphoribosyltransferase family. In terms of assembly, homodimer.

Its subcellular location is the cytoplasm. It carries out the reaction AMP + diphosphate = 5-phospho-alpha-D-ribose 1-diphosphate + adenine. Its pathway is purine metabolism; AMP biosynthesis via salvage pathway; AMP from adenine: step 1/1. In terms of biological role, catalyzes a salvage reaction resulting in the formation of AMP, that is energically less costly than de novo synthesis. This is Adenine phosphoribosyltransferase from Shigella flexneri serotype 5b (strain 8401).